A 117-amino-acid polypeptide reads, in one-letter code: Crustacean hyperglycemic hormones 3 (117 aa).

Residues 1–24 (MVTPRMLSALSAVLLLVLTASSSA) form the signal peptide. Intrachain disulfides connect Cys-50–Cys-86, Cys-66–Cys-82, and Cys-69–Cys-95. Position 115 is a valine amide (Val-115).

The protein belongs to the arthropod CHH/MIH/GIH/VIH hormone family. As to expression, produced by the medulla terminalis X-organ in the eyestalks and transported to the sinus gland where they are stored and released.

It is found in the secreted. Functionally, hormone found in the sinus gland of isopods and decapods which controls the blood sugar level. Has a secretagogue action over the amylase released from the midgut gland. May act as a stress hormone and may be involved in the control of molting and reproduction. This is Crustacean hyperglycemic hormones 3 from Penaeus japonicus (Kuruma prawn).